A 521-amino-acid chain; its full sequence is Bifunctional purine biosynthesis protein PurH (521 aa).

An MGS-like domain is found at 1-147 (MGEITRALIS…KNWEGVTVLV (147 aa)).

The protein belongs to the PurH family.

It catalyses the reaction (6R)-10-formyltetrahydrofolate + 5-amino-1-(5-phospho-beta-D-ribosyl)imidazole-4-carboxamide = 5-formamido-1-(5-phospho-D-ribosyl)imidazole-4-carboxamide + (6S)-5,6,7,8-tetrahydrofolate. The enzyme catalyses IMP + H2O = 5-formamido-1-(5-phospho-D-ribosyl)imidazole-4-carboxamide. It functions in the pathway purine metabolism; IMP biosynthesis via de novo pathway; 5-formamido-1-(5-phospho-D-ribosyl)imidazole-4-carboxamide from 5-amino-1-(5-phospho-D-ribosyl)imidazole-4-carboxamide (10-formyl THF route): step 1/1. The protein operates within purine metabolism; IMP biosynthesis via de novo pathway; IMP from 5-formamido-1-(5-phospho-D-ribosyl)imidazole-4-carboxamide: step 1/1. In Acidithiobacillus ferrooxidans (strain ATCC 53993 / BNL-5-31) (Leptospirillum ferrooxidans (ATCC 53993)), this protein is Bifunctional purine biosynthesis protein PurH.